Here is an 871-residue protein sequence, read N- to C-terminus: Zinc finger protein 473 (871 aa).

In terms of domain architecture, KRAB spans 6 to 75; sequence VTLKDVGMDF…AGGSPEATSP (70 aa). 2 disordered regions span residues 47-81 and 140-164; these read PPRPNLTSHPDGSEDLEPLAGGSPEATSPDVTETK and NGESPTECKSHELKRGLSPVSTVST. Residues 71–81 show a composition bias toward polar residues; sequence EATSPDVTETK. A compositionally biased stretch (basic and acidic residues) spans 145-154; that stretch reads TECKSHELKR. K148 is covalently cross-linked (Glycyl lysine isopeptide (Lys-Gly) (interchain with G-Cter in SUMO2)). Residues 209-231 form a C2H2-type 1 zinc finger; it reads YQCSECGKSFSGSYRLTQHWITH. Residues 265 to 286 form a C2H2-type 2; degenerate zinc finger; sequence YVCNEYGTTFSQSTYLWHQKTH. Residues 290 to 317 are compositionally biased toward basic and acidic residues; sequence KPCKSQDSDHPPSHDTQPGEHQKTHTDS. Residues 290–318 form a disordered region; the sequence is KPCKSQDSDHPPSHDTQPGEHQKTHTDSK. An interaction with SLBP/pre-mRNA complex region spans residues 312 to 552; the sequence is KTHTDSKSYN…GFFVSGKILD (241 aa). C2H2-type zinc fingers lie at residues 320–342, 347–369, and 375–397; these read YNCNECGKAFTRIFHLTRHQKIH, YECSKCQATFNLRKHLIQHQKTH, and SECQECGKIFRHSSLLIEHQALH. The C2H2-type 6; degenerate zinc finger occupies 403–425; it reads YKCNERGKSFRHNSTLKIHQRVH. K419 participates in a covalent cross-link: Glycyl lysine isopeptide (Lys-Gly) (interchain with G-Cter in SUMO2). C2H2-type zinc fingers lie at residues 431 to 453, 459 to 481, 487 to 509, and 515 to 537; these read YKCSECGKAFHRHTHLNEHRRIH, HKCQECVRSFSRPSHLMRHQAIH, YSCAECKETFSDNNRLVQHQKMH, and YECQECGERFICGSTLKCHESVH. Glycyl lysine isopeptide (Lys-Gly) (interchain with G-Cter in SUMO2) cross-links involve residues K549 and K558. 2 consecutive C2H2-type zinc fingers follow at residues 562–584 and 591–613; these read FKCNKCEKTFSCSKYLTQHERIH and FECDQCGKAFGQSTRLIHHQRIH. K635 is covalently cross-linked (Glycyl lysine isopeptide (Lys-Gly) (interchain with G-Cter in SUMO2)). 8 C2H2-type zinc fingers span residues 646 to 668, 674 to 696, 702 to 724, 730 to 752, 758 to 780, 786 to 808, 814 to 836, and 842 to 864; these read FKCNECGKTFSHSAHLSKHQLIH, FKCSKCDRVFTQRNYLVQHERTH, LVCNECGKTFRQSSCLSKHQRIH, YVCDYCGKAFGLSAELVRHQRIH, YVCQECGKAFTQSSCLSIHRRVH, YRCGECGKAFAQKANLTQHQRIH, YSCNVCGKAFVLSAHLNQHLRVH, and YQCQRCQKAFRCHSSLSRHQRVH.

It belongs to the krueppel C2H2-type zinc-finger protein family. In terms of assembly, interacts with the SLBP/pre-mRNA complex but not with SLBP alone. Interacts with LSM11 in a U7 snRNP-dependent manner.

The protein localises to the nucleus. Functionally, involved in histone 3'-end pre-mRNA processing by associating with U7 snRNP and interacting with SLBP/pre-mRNA complex. Increases histone 3'-end pre-mRNA processing but has no effect on U7 snRNP levels, when overexpressed. Required for cell cycle progression from G1 to S phases. The chain is Zinc finger protein 473 (ZNF473) from Homo sapiens (Human).